Consider the following 698-residue polypeptide: Probable xyloglucan glycosyltransferase 2 (698 aa).

Transmembrane regions (helical) follow at residues 124–144 and 190–210; these read GFLALSLLALAVELAAYWNGW and ILLFVIQSMDRLVLCLGCFWI. Residue Asp272 is part of the active site. Positions 331 and 333 each coordinate substrate. The active site involves Asp425. 4 helical membrane passes run 503 to 523, 528 to 548, 653 to 668, and 673 to 693; these read LILPFYSFTLFCVILPLTMFV, LPVWVICYVPVCMSFLNILPS, LALSLLLLTAATRSLL, and IHFYFLLFQGVSFLFVGLDLI.

This sequence belongs to the glycosyltransferase 2 family. Plant cellulose synthase-like C subfamily.

Its subcellular location is the golgi apparatus membrane. Functionally, probable beta-1,4-glucan synthase rather involved in the synthesis of the xyloglucan backbone than cellulose. Seems to work simultaneously with xyloglucan 6-xylosyltransferase. Xyloglucan is a noncellulosic polysaccharides of plant cell wall and consists of a glucan backbone substituted by xylose, galactose and fucose. The sequence is that of Probable xyloglucan glycosyltransferase 2 (CSLC2) from Oryza sativa subsp. indica (Rice).